The primary structure comprises 416 residues: Imidazolonepropionase (416 aa).

The Fe(3+) site is built by His82 and His84. Zn(2+) contacts are provided by His82 and His84. Arg91, Tyr154, and His187 together coordinate 4-imidazolone-5-propanoate. Tyr154 contributes to the N-formimidoyl-L-glutamate binding site. His252 provides a ligand contact to Fe(3+). His252 lines the Zn(2+) pocket. 4-imidazolone-5-propanoate is bound at residue Glu255. Residue Asp326 coordinates Fe(3+). Position 326 (Asp326) interacts with Zn(2+). Asn328 and Gly330 together coordinate N-formimidoyl-L-glutamate. Ser331 contributes to the 4-imidazolone-5-propanoate binding site.

The protein belongs to the metallo-dependent hydrolases superfamily. HutI family. Zn(2+) is required as a cofactor. It depends on Fe(3+) as a cofactor.

It is found in the cytoplasm. It carries out the reaction 4-imidazolone-5-propanoate + H2O = N-formimidoyl-L-glutamate. It participates in amino-acid degradation; L-histidine degradation into L-glutamate; N-formimidoyl-L-glutamate from L-histidine: step 3/3. Functionally, catalyzes the hydrolytic cleavage of the carbon-nitrogen bond in imidazolone-5-propanoate to yield N-formimidoyl-L-glutamate. It is the third step in the universal histidine degradation pathway. The sequence is that of Imidazolonepropionase from Parabacteroides distasonis (strain ATCC 8503 / DSM 20701 / CIP 104284 / JCM 5825 / NCTC 11152).